The sequence spans 271 residues: NADPH-dependent 7-cyano-7-deazaguanine reductase (271 aa).

Position 79–81 (79–81 (IES)) interacts with substrate. 81–82 (SK) is an NADPH binding site. Cys178 serves as the catalytic Thioimide intermediate. Catalysis depends on Asp185, which acts as the Proton donor. 217 to 218 (HE) is a substrate binding site. 246–247 (RG) contributes to the NADPH binding site.

This sequence belongs to the GTP cyclohydrolase I family. QueF type 2 subfamily. Homodimer.

Its subcellular location is the cytoplasm. It carries out the reaction 7-aminomethyl-7-carbaguanine + 2 NADP(+) = 7-cyano-7-deazaguanine + 2 NADPH + 3 H(+). It participates in tRNA modification; tRNA-queuosine biosynthesis. Functionally, catalyzes the NADPH-dependent reduction of 7-cyano-7-deazaguanine (preQ0) to 7-aminomethyl-7-deazaguanine (preQ1). This is NADPH-dependent 7-cyano-7-deazaguanine reductase from Acinetobacter baylyi (strain ATCC 33305 / BD413 / ADP1).